A 178-amino-acid chain; its full sequence is ATP synthase subunit delta (178 aa).

Belongs to the ATPase delta chain family. As to quaternary structure, F-type ATPases have 2 components, F(1) - the catalytic core - and F(0) - the membrane proton channel. F(1) has five subunits: alpha(3), beta(3), gamma(1), delta(1), epsilon(1). F(0) has three main subunits: a(1), b(2) and c(10-14). The alpha and beta chains form an alternating ring which encloses part of the gamma chain. F(1) is attached to F(0) by a central stalk formed by the gamma and epsilon chains, while a peripheral stalk is formed by the delta and b chains.

It localises to the cell inner membrane. Its function is as follows. F(1)F(0) ATP synthase produces ATP from ADP in the presence of a proton or sodium gradient. F-type ATPases consist of two structural domains, F(1) containing the extramembraneous catalytic core and F(0) containing the membrane proton channel, linked together by a central stalk and a peripheral stalk. During catalysis, ATP synthesis in the catalytic domain of F(1) is coupled via a rotary mechanism of the central stalk subunits to proton translocation. In terms of biological role, this protein is part of the stalk that links CF(0) to CF(1). It either transmits conformational changes from CF(0) to CF(1) or is implicated in proton conduction. This is ATP synthase subunit delta from Nitrosospira multiformis (strain ATCC 25196 / NCIMB 11849 / C 71).